The sequence spans 238 residues: 1-(5-phosphoribosyl)-5-[(5-phosphoribosylamino)methylideneamino] imidazole-4-carboxamide isomerase (238 aa).

The active-site Proton acceptor is aspartate 8. Catalysis depends on aspartate 129, which acts as the Proton donor.

This sequence belongs to the HisA/HisF family.

The protein resides in the cytoplasm. The catalysed reaction is 1-(5-phospho-beta-D-ribosyl)-5-[(5-phospho-beta-D-ribosylamino)methylideneamino]imidazole-4-carboxamide = 5-[(5-phospho-1-deoxy-D-ribulos-1-ylimino)methylamino]-1-(5-phospho-beta-D-ribosyl)imidazole-4-carboxamide. The protein operates within amino-acid biosynthesis; L-histidine biosynthesis; L-histidine from 5-phospho-alpha-D-ribose 1-diphosphate: step 4/9. This is 1-(5-phosphoribosyl)-5-[(5-phosphoribosylamino)methylideneamino] imidazole-4-carboxamide isomerase from Clostridium kluyveri (strain NBRC 12016).